The sequence spans 388 residues: Succinate--CoA ligase [ADP-forming] subunit beta (388 aa).

The region spanning 9–245 (KELLKSYGLP…KSQENERELK (237 aa)) is the ATP-grasp domain. Residues K46, 53-55 (GRG), E100, Y103, and E108 each bind ATP. 2 residues coordinate Mg(2+): N200 and D214. Substrate contacts are provided by residues N265 and 322-324 (GIV).

The protein belongs to the succinate/malate CoA ligase beta subunit family. In terms of assembly, heterotetramer of two alpha and two beta subunits. Mg(2+) serves as cofactor.

The enzyme catalyses succinate + ATP + CoA = succinyl-CoA + ADP + phosphate. It catalyses the reaction GTP + succinate + CoA = succinyl-CoA + GDP + phosphate. Its pathway is carbohydrate metabolism; tricarboxylic acid cycle; succinate from succinyl-CoA (ligase route): step 1/1. In terms of biological role, succinyl-CoA synthetase functions in the citric acid cycle (TCA), coupling the hydrolysis of succinyl-CoA to the synthesis of either ATP or GTP and thus represents the only step of substrate-level phosphorylation in the TCA. The beta subunit provides nucleotide specificity of the enzyme and binds the substrate succinate, while the binding sites for coenzyme A and phosphate are found in the alpha subunit. In Psychrobacter arcticus (strain DSM 17307 / VKM B-2377 / 273-4), this protein is Succinate--CoA ligase [ADP-forming] subunit beta.